Here is a 537-residue protein sequence, read N- to C-terminus: Chaperonin GroEL (537 aa).

ATP contacts are provided by residues 29–32 (TLGP), 86–90 (DGTTT), Gly-413, 477–479 (NAA), and Asp-493.

The protein belongs to the chaperonin (HSP60) family. As to quaternary structure, forms a cylinder of 14 subunits composed of two heptameric rings stacked back-to-back. Interacts with the co-chaperonin GroES.

The protein localises to the cytoplasm. It carries out the reaction ATP + H2O + a folded polypeptide = ADP + phosphate + an unfolded polypeptide.. Its function is as follows. Together with its co-chaperonin GroES, plays an essential role in assisting protein folding. The GroEL-GroES system forms a nano-cage that allows encapsulation of the non-native substrate proteins and provides a physical environment optimized to promote and accelerate protein folding. The protein is Chaperonin GroEL of Lactobacillus delbrueckii subsp. bulgaricus (strain ATCC 11842 / DSM 20081 / BCRC 10696 / JCM 1002 / NBRC 13953 / NCIMB 11778 / NCTC 12712 / WDCM 00102 / Lb 14).